The following is a 346-amino-acid chain: Uroporphyrinogen decarboxylase (346 aa).

Residues 21 to 25, D71, Y146, S201, and H316 each bind substrate; that span reads RQAGR.

It belongs to the uroporphyrinogen decarboxylase family. In terms of assembly, homodimer.

Its subcellular location is the cytoplasm. It catalyses the reaction uroporphyrinogen III + 4 H(+) = coproporphyrinogen III + 4 CO2. It participates in porphyrin-containing compound metabolism; protoporphyrin-IX biosynthesis; coproporphyrinogen-III from 5-aminolevulinate: step 4/4. Functionally, catalyzes the decarboxylation of four acetate groups of uroporphyrinogen-III to yield coproporphyrinogen-III. The sequence is that of Uroporphyrinogen decarboxylase from Rickettsia massiliae (strain Mtu5).